Reading from the N-terminus, the 513-residue chain is Laccase (513 aa).

Plastocyanin-like domains lie at 45–81 (PTRLWGYNGLFPGPTIEVKRNENVYVKWMNNLPSTHF), 101–178 (KTVV…HDPK), 240–318 (WPYL…ILAN), and 378–509 (QDEY…MDIT). 4 residues coordinate Cu cation: His-105, His-107, His-153, and His-155. Cu cation-binding residues include His-419, His-422, His-424, His-491, Cys-492, His-493, His-497, and Met-502.

This sequence belongs to the multicopper oxidase family. As to quaternary structure, monomer. It depends on Cu(2+) as a cofactor.

It is found in the spore coat. The catalysed reaction is 4 hydroquinone + O2 = 4 benzosemiquinone + 2 H2O. It carries out the reaction 2 (4Z,15Z)-bilirubin IXalpha + O2 = 2 biliverdin IXalpha + 2 H2O. With respect to regulation, inhibited by azide. Multicopper oxidase that catalyzes the oxidation of a variety of substrates, including phenolic and non-phenolic compounds. Substrates include syringaldazine (SGZ), 2,6-dimethoxyphenol (2,6-DMP) and the non-phenolic compound 2,2'-azino-bis(3-ethylbenzothiazoline-6-sulfonic acid) (ABTS). Has no tyrosinase activity. Is implicated in the biosynthesis of a brownish pigment that characterizes sporulating colonies of B.subtilis, and which appears to be a melanin-like product and to confer protection against UV light. Functionally, in vitro, also shows strong bilirubin oxidase (BOD) activity, and can catalyze the oxidation of free bilirubin (UB), direct bilirubin (conjugated with glucuronic acid, DB) and ditaurobilirubin. The chain is Laccase from Bacillus subtilis (strain 168).